The chain runs to 454 residues: MNLKKKKVLVVGAGRSGLAAVKRLKALGARVILTDQKEPDQLSGILELGLPDGQLVLGHIPQWHEVEAEVIVLSPGVSPQLPFIQEGIAQGALVWSEVELALRDHPAFKIGVTGTNGKTTTTTLIGELARRTGKSTLVAGNIGVALSDQVENLDEEGIIVAELSSFQLELVDSLCMNVGILLNVTPDHLDRHGTLENYLAAKARIFEKQRPSDCAILNWDDARVRELAPHLKARVVFFSPTSLLAEGYGVQGDEIVLARDGKITPIIKRRELQLRGNHNLENIMASIAAVRELGLSWEEIAQGLREFKGVEHRQEVVGTYEGILFINDSKGTNPDAAEKALYAFEEPIVLIAGGKNKGLDFHDFMKTVKEQVKSLVLVGSAAAEMEQAAKDTGIRHYLRAETFAEAVELAIAEAEPGNVVLLSPACTSWDMFKSYEERGEFFKELVRRHYREPI.

Position 114 to 120 (Gly114 to Thr120) interacts with ATP.

Belongs to the MurCDEF family.

Its subcellular location is the cytoplasm. The catalysed reaction is UDP-N-acetyl-alpha-D-muramoyl-L-alanine + D-glutamate + ATP = UDP-N-acetyl-alpha-D-muramoyl-L-alanyl-D-glutamate + ADP + phosphate + H(+). It functions in the pathway cell wall biogenesis; peptidoglycan biosynthesis. In terms of biological role, cell wall formation. Catalyzes the addition of glutamate to the nucleotide precursor UDP-N-acetylmuramoyl-L-alanine (UMA). The polypeptide is UDP-N-acetylmuramoylalanine--D-glutamate ligase (Desulfitobacterium hafniense (strain DSM 10664 / DCB-2)).